The following is a 184-amino-acid chain: Probable RNA 2'-phosphotransferase (184 aa).

It belongs to the KptA/TPT1 family.

In terms of biological role, removes the 2'-phosphate from RNA via an intermediate in which the phosphate is ADP-ribosylated by NAD followed by a presumed transesterification to release the RNA and generate ADP-ribose 1''-2''-cyclic phosphate (APPR&gt;P). May function as an ADP-ribosylase. The polypeptide is Probable RNA 2'-phosphotransferase (Escherichia coli O6:K15:H31 (strain 536 / UPEC)).